The following is a 23-amino-acid chain: Cytochrome c oxidase subunit 7A1, mitochondrial (23 aa).

This sequence belongs to the cytochrome c oxidase VIIa family. In terms of assembly, component of the complex IV (CIV, cytochrome c oxidase), a multisubunit enzyme composed of 14 subunits. The complex is composed of a catalytic core of 3 subunits MT-CO1, MT-CO2 and MT-CO3, encoded in the mitochondrial DNA, and 11 supernumerary subunits COX4I1 (or COX4I2), COX5A, COX5B, COX6A2 (or COX6A1), COX6B1 (or COX6B2), COX6C, COX7A1 (or COX7A2), COX7B, COX7C, COX8B and NDUFA4, which are encoded in the nuclear genome. The complex exists as a monomer or a dimer and forms supercomplexes (SCs) in the inner mitochondrial membrane with NADH-ubiquinone oxidoreductase (complex I, CI) and ubiquinol-cytochrome c oxidoreductase (cytochrome b-c1 complex, complex III, CIII), resulting in different assemblies (supercomplex SCI(1)III(2)IV(1) and megacomplex MCI(2)III(2)IV(2)).

It localises to the mitochondrion inner membrane. It functions in the pathway energy metabolism; oxidative phosphorylation. Component of the mitochondrial respiratory complex IV (CIV, also named cytochrome c oxidase complex), the last enzyme in the mitochondrial electron transport chain which drives oxidative phosphorylation. The CIV complex is the component of the respiratory chain that catalyzes the reduction of oxygen to water. Acts as an assembly factor that specifically drives the homodimerization of CIV complexes, mediating the formation of mitochondrial respiratory supercomplexes (respirasomes) containing two CIV: supercomplxes with two molecules of CIV show improved activity. Despite being highly expressed in brown adipose tissue, not required for thermogenesis. The polypeptide is Cytochrome c oxidase subunit 7A1, mitochondrial (COX7A1) (Canis lupus familiaris (Dog)).